Reading from the N-terminus, the 906-residue chain is Protein translocase subunit SecA (906 aa).

Residues Q86, 104–108, and D511 contribute to the ATP site; that span reads GEGKT. Composition is skewed to basic and acidic residues over residues 853-865 and 877-888; these read HESV…RHDE and VRREGPKVKRND. A disordered region spans residues 853–906; the sequence is HESVIDNNQRHDEDEQEETPKVQQVRREGPKVKRNDPCPCGSGKKYKQCHGKVE. C890, C892, C901, and H902 together coordinate Zn(2+). Basic residues predominate over residues 896–906; it reads KKYKQCHGKVE.

This sequence belongs to the SecA family. Monomer and homodimer. Part of the essential Sec protein translocation apparatus which comprises SecA, SecYEG and auxiliary proteins SecDF-YajC and YidC. The cofactor is Zn(2+).

It localises to the cell inner membrane. The protein localises to the cytoplasm. The catalysed reaction is ATP + H2O + cellular proteinSide 1 = ADP + phosphate + cellular proteinSide 2.. Functionally, part of the Sec protein translocase complex. Interacts with the SecYEG preprotein conducting channel. Has a central role in coupling the hydrolysis of ATP to the transfer of proteins into and across the cell membrane, serving both as a receptor for the preprotein-SecB complex and as an ATP-driven molecular motor driving the stepwise translocation of polypeptide chains across the membrane. The protein is Protein translocase subunit SecA of Francisella tularensis subsp. novicida (strain U112).